Consider the following 232-residue polypeptide: tRNA (guanine-N(1)-)-methyltransferase (232 aa).

S-adenosyl-L-methionine-binding positions include Gly111 and 131–136 (IGDYIL).

The protein belongs to the RNA methyltransferase TrmD family. As to quaternary structure, homodimer.

It is found in the cytoplasm. The enzyme catalyses guanosine(37) in tRNA + S-adenosyl-L-methionine = N(1)-methylguanosine(37) in tRNA + S-adenosyl-L-homocysteine + H(+). Specifically methylates guanosine-37 in various tRNAs. The chain is tRNA (guanine-N(1)-)-methyltransferase from Bartonella quintana (strain Toulouse) (Rochalimaea quintana).